We begin with the raw amino-acid sequence, 465 residues long: UDP-N-acetylmuramate--L-alanine ligase (465 aa).

Residue 115–121 (GAHGKTT) participates in ATP binding.

Belongs to the MurCDEF family.

Its subcellular location is the cytoplasm. It catalyses the reaction UDP-N-acetyl-alpha-D-muramate + L-alanine + ATP = UDP-N-acetyl-alpha-D-muramoyl-L-alanine + ADP + phosphate + H(+). Its pathway is cell wall biogenesis; peptidoglycan biosynthesis. Functionally, cell wall formation. This chain is UDP-N-acetylmuramate--L-alanine ligase, found in Coxiella burnetii (strain Dugway 5J108-111).